A 368-amino-acid polypeptide reads, in one-letter code: N-acetylneuraminate epimerase (368 aa).

An N-terminal signal peptide occupies residues 1-19 (MNKTITALAIMMASFAANA). Kelch repeat units lie at residues 40–84 (TVYI…AFID), 86–137 (NLYV…FVHN), 139–173 (KAYV…KINA), 174–219 (YYFD…VNKG), 222–265 (TWLI…VAGG), 287–336 (ENYQ…PWNN), and 338–367 (LLII…VTVQ). E228 functions as the Proton acceptor in the catalytic mechanism.

It belongs to the NanM family. As to quaternary structure, homodimer.

It is found in the periplasm. The enzyme catalyses N-acetyl-alpha-neuraminate = N-acetyl-beta-neuraminate. Converts alpha-N-acetylneuranimic acid (Neu5Ac) to the beta-anomer, accelerating the equilibrium between the alpha- and beta-anomers. Probably facilitates sialidase-negative bacteria to compete successfully for limited amounts of extracellular Neu5Ac, which is likely taken up in the beta-anomer. In addition, the rapid removal of sialic acid from solution might be advantageous to the bacterium to damp down host responses. The chain is N-acetylneuraminate epimerase from Shigella boydii serotype 4 (strain Sb227).